The chain runs to 192 residues: A-type ATP synthase subunit E (192 aa).

The protein belongs to the V-ATPase E subunit family. In terms of assembly, has multiple subunits with at least A(3), B(3), C, D, E, F, H, I and proteolipid K(x).

It localises to the cell membrane. Component of the A-type ATP synthase that produces ATP from ADP in the presence of a proton gradient across the membrane. The polypeptide is A-type ATP synthase subunit E (Methanocorpusculum labreanum (strain ATCC 43576 / DSM 4855 / Z)).